A 232-amino-acid polypeptide reads, in one-letter code: Octanoyltransferase (232 aa).

Residues 32 to 219 (NIIYDTLILL…SFKVFNFSSY (188 aa)) form the BPL/LPL catalytic domain. Residues 77-84 (RGGDITYH), 140-142 (AIG), and 153-155 (GFA) each bind substrate. The active-site Acyl-thioester intermediate is the Cys171.

It belongs to the LipB family.

The protein resides in the cytoplasm. The enzyme catalyses octanoyl-[ACP] + L-lysyl-[protein] = N(6)-octanoyl-L-lysyl-[protein] + holo-[ACP] + H(+). Its pathway is protein modification; protein lipoylation via endogenous pathway; protein N(6)-(lipoyl)lysine from octanoyl-[acyl-carrier-protein]: step 1/2. Catalyzes the transfer of endogenously produced octanoic acid from octanoyl-acyl-carrier-protein onto the lipoyl domains of lipoate-dependent enzymes. Lipoyl-ACP can also act as a substrate although octanoyl-ACP is likely to be the physiological substrate. In Dictyoglomus turgidum (strain DSM 6724 / Z-1310), this protein is Octanoyltransferase.